We begin with the raw amino-acid sequence, 327 residues long: WRKY transcription factor WRKY76 (327 aa).

The stretch at 56 to 76 (AKILEAKVTQMSEENRRLTEV) forms a coiled coil. The disordered stretch occupies residues 88 to 134 (LGLDGSASPPRPVSPLSGKKRSRESMETANSCDANSNRHQGGDADHA). A Nuclear localization signal motif is present at residues 106 to 112 (KKRSRES). The span at 114–126 (ETANSCDANSNRH) shows a compositional bias: polar residues. A DNA-binding region (WRKY) is located at residues 160–226 (DTSLVVKDGY…YEGEHNHPHP (67 aa)).

It belongs to the WRKY group II-a family.

It is found in the nucleus. Transcription repressor. Interacts specifically with the W box (5'-(T)TGAC[CT]-3'), a frequently occurring elicitor-responsive cis-acting element. Regulates, probably indirectly, the activation of defense-related genes during defense response. Modulates plant innate immunity against X.oryzae pv. oryzae (Xoo). In Oryza sativa subsp. indica (Rice), this protein is WRKY transcription factor WRKY76.